Reading from the N-terminus, the 88-residue chain is UPF0298 protein Bcer98_2635 (88 aa).

This sequence belongs to the UPF0298 family.

Its subcellular location is the cytoplasm. The chain is UPF0298 protein Bcer98_2635 from Bacillus cytotoxicus (strain DSM 22905 / CIP 110041 / 391-98 / NVH 391-98).